The sequence spans 741 residues: Beta-galactosidase 10 (741 aa).

The N-terminal stretch at 1–29 (MNRVTTESIASTAILVVMVFLFSWRSIEA) is a signal peptide. Asparagine 31 is a glycosylation site (N-linked (GlcNAc...) asparagine). The active-site Proton donor is glutamate 188. Glutamate 257 (nucleophile) is an active-site residue. N-linked (GlcNAc...) asparagine glycosylation is found at asparagine 358, asparagine 396, asparagine 469, asparagine 525, and asparagine 583.

This sequence belongs to the glycosyl hydrolase 35 family. Ubiquitous.

It is found in the secreted. The protein localises to the extracellular space. Its subcellular location is the apoplast. It carries out the reaction Hydrolysis of terminal non-reducing beta-D-galactose residues in beta-D-galactosides.. This Arabidopsis thaliana (Mouse-ear cress) protein is Beta-galactosidase 10 (BGAL10).